The primary structure comprises 259 residues: (3R)-3-hydroxyacyl-CoA dehydrogenase (259 aa).

Residues 13–21 and 40–41 contribute to the NAD(+) site; these read LVTGAGSGI and DL. Residue serine 58 is modified to Phosphoserine. Lysine 66 is modified (N6-acetyllysine). 72 to 74 provides a ligand contact to NAD(+); sequence ADV. Serine 154 contributes to the substrate binding site. N6-succinyllysine is present on lysine 158. Tyrosine 167 serves as the catalytic Proton acceptor. NAD(+)-binding positions include 167 to 171 and 200 to 202; these read YASSK and IAT. Lysine 171 is modified (N6-succinyllysine).

This sequence belongs to the short-chain dehydrogenases/reductases (SDR) family. As to quaternary structure, heterotetramer with CBR4; contains two molecules of HSD17B8 and CBR4. In terms of tissue distribution, expressed in ovary at protein level.

The protein resides in the mitochondrion matrix. The catalysed reaction is a (3R)-3-hydroxyacyl-CoA + NAD(+) = a 3-oxoacyl-CoA + NADH + H(+). The enzyme catalyses 17beta-estradiol + NAD(+) = estrone + NADH + H(+). It catalyses the reaction testosterone + NAD(+) = androst-4-ene-3,17-dione + NADH + H(+). It carries out the reaction 17beta-hydroxy-5alpha-androstan-3-one + NAD(+) = 5alpha-androstan-3,17-dione + NADH + H(+). The protein operates within steroid biosynthesis; estrogen biosynthesis. Its pathway is lipid metabolism; fatty acid biosynthesis. It functions in the pathway lipid metabolism; mitochondrial fatty acid beta-oxidation. In terms of biological role, required for the solubility and assembly of the heterotetramer 3-ketoacyl-[acyl carrier protein] (ACP) reductase functional complex (KAR or KAR1) that forms part of the mitochondrial fatty acid synthase (mtFAS). Alpha-subunit of the KAR complex that acts as scaffold protein required for the stability of carbonyl reductase type-4 (CBR4, beta-subunit of the KAR complex) and for its 3-ketoacyl-ACP reductase activity, thereby participating in mitochondrial fatty acid biosynthesis. Catalyzes the NAD-dependent conversion of (3R)-3-hydroxyacyl-CoA into 3-ketoacyl-CoA (3-oxoacyl-CoA) with no chain length preference; this enzymatic activity is not needed for the KAR function. Prefers (3R)-3-hydroxyacyl-CoA over (3S)-3-hydroxyacyl-CoA and displays enzymatic activity only in the presence of NAD(+). Cooperates with enoyl-CoA hydratase 1 in mitochondria, together they constitute an alternative route to the auxiliary enzyme pathways for the breakdown of Z-PUFA (cis polyunsaturated fatty acid) enoyl-esters. NAD-dependent 17-beta-hydroxysteroid dehydrogenase with highest activity towards estradiol (17beta-estradiol or E2). Has very low activity towards testosterone and dihydrotestosterone (17beta-hydroxy-5alpha-androstan-3-one). Primarily an oxidative enzyme, it can switch to a reductive mode determined in the appropriate physiologic milieu and catalyze the reduction of estrone (E1) to form biologically active 17beta-estradiol. This is (3R)-3-hydroxyacyl-CoA dehydrogenase (Hsd17b8) from Rattus norvegicus (Rat).